Here is a 425-residue protein sequence, read N- to C-terminus: Serine--tRNA ligase 2 (425 aa).

234 to 236 (TAE) provides a ligand contact to L-serine. Residue 265–267 (RVE) participates in ATP binding. An L-serine-binding site is contributed by glutamate 288. Residue 352-355 (EVSS) participates in ATP binding. An L-serine-binding site is contributed by serine 388.

This sequence belongs to the class-II aminoacyl-tRNA synthetase family. Type-1 seryl-tRNA synthetase subfamily. As to quaternary structure, homodimer. The tRNA molecule binds across the dimer.

The protein resides in the cytoplasm. It catalyses the reaction tRNA(Ser) + L-serine + ATP = L-seryl-tRNA(Ser) + AMP + diphosphate + H(+). The enzyme catalyses tRNA(Sec) + L-serine + ATP = L-seryl-tRNA(Sec) + AMP + diphosphate + H(+). The protein operates within aminoacyl-tRNA biosynthesis; selenocysteinyl-tRNA(Sec) biosynthesis; L-seryl-tRNA(Sec) from L-serine and tRNA(Sec): step 1/1. Catalyzes the attachment of serine to tRNA(Ser). Is also able to aminoacylate tRNA(Sec) with serine, to form the misacylated tRNA L-seryl-tRNA(Sec), which will be further converted into selenocysteinyl-tRNA(Sec). In Clostridium acetobutylicum (strain ATCC 824 / DSM 792 / JCM 1419 / IAM 19013 / LMG 5710 / NBRC 13948 / NRRL B-527 / VKM B-1787 / 2291 / W), this protein is Serine--tRNA ligase 2.